Reading from the N-terminus, the 223-residue chain is Phosphoribosylformylglycinamidine synthase subunit PurQ (223 aa).

The region spanning 3–223 (FAVLVFPGSN…MVKSWREQHV (221 aa)) is the Glutamine amidotransferase type-1 domain. Cys85 serves as the catalytic Nucleophile. Catalysis depends on residues His193 and Glu195.

In terms of assembly, part of the FGAM synthase complex composed of 1 PurL, 1 PurQ and 2 PurS subunits.

It is found in the cytoplasm. The enzyme catalyses N(2)-formyl-N(1)-(5-phospho-beta-D-ribosyl)glycinamide + L-glutamine + ATP + H2O = 2-formamido-N(1)-(5-O-phospho-beta-D-ribosyl)acetamidine + L-glutamate + ADP + phosphate + H(+). It catalyses the reaction L-glutamine + H2O = L-glutamate + NH4(+). It functions in the pathway purine metabolism; IMP biosynthesis via de novo pathway; 5-amino-1-(5-phospho-D-ribosyl)imidazole from N(2)-formyl-N(1)-(5-phospho-D-ribosyl)glycinamide: step 1/2. Part of the phosphoribosylformylglycinamidine synthase complex involved in the purines biosynthetic pathway. Catalyzes the ATP-dependent conversion of formylglycinamide ribonucleotide (FGAR) and glutamine to yield formylglycinamidine ribonucleotide (FGAM) and glutamate. The FGAM synthase complex is composed of three subunits. PurQ produces an ammonia molecule by converting glutamine to glutamate. PurL transfers the ammonia molecule to FGAR to form FGAM in an ATP-dependent manner. PurS interacts with PurQ and PurL and is thought to assist in the transfer of the ammonia molecule from PurQ to PurL. The sequence is that of Phosphoribosylformylglycinamidine synthase subunit PurQ from Staphylococcus aureus (strain USA300).